Consider the following 497-residue polypeptide: Delayed-rectifier potassium channel regulatory subunit KCNS1 (497 aa).

The Cytoplasmic segment spans residues 1–186 (MVSEFPGPGS…LTMENPGYSL (186 aa)). Residues 187-208 (PSKLFSCVSIGVVLASIAAMCI) form a helical membrane-spanning segment. The Extracellular segment spans residues 209-239 (HSLPEYQAREAAAAVAAVAAGRSAEEVRDDP). A helical membrane pass occupies residues 240–262 (VLRRLEYFCIAWFSFEVSSRLLL). Residues 263-273 (APSTRNFFCHP) are Cytoplasmic-facing. Residues 274–291 (LNLIDIVSVLPFYLTLLA) form a helical membrane-spanning segment. At 292–309 (GAALGDQRGASGEELGDL) the chain is on the extracellular side. The helical; Voltage-sensor transmembrane segment at 310-330 (GKVVQVFRLMRIFRVLKLARH) threads the bilayer. Residues 331 to 345 (STGLRSLGATLKHSY) lie on the Cytoplasmic side of the membrane. A helical membrane pass occupies residues 346 to 367 (REVGILLLYLAVGVSVFSGVAY). Over 368–379 (TAEEENEGFHTI) the chain is Extracellular. Residues 380–391 (PACWWWGTVSMT) constitute an intramembrane region (helical). The Selectivity filter signature appears at 392–397 (TVGYGD). An intramembrane segment occupies 392–399 (TVGYGDVV). At 400 to 406 (PETVGGK) the chain is on the extracellular side. The helical transmembrane segment at 407-435 (LAASGCILGGILVVALPITIIFNKFSHFY) threads the bilayer. The Cytoplasmic segment spans residues 436–497 (RRQKALEAAV…PREPAKSHSY (62 aa)). The tract at residues 464–497 (SDVSLETSRDTSQEGRSTDLETQAPREPAKSHSY) is disordered. Positions 470-482 (TSRDTSQEGRSTD) are enriched in basic and acidic residues.

Belongs to the potassium channel family. S (TC 1.A.1.2) subfamily. Kv9.1/KCNS1 sub-subfamily. As to quaternary structure, heterotetramer with KCNB1 and KCNB2. Does not form homomultimers. Detected in brain, but not in the other tissues tested. The highest levels of expression are in olfactory bulb, cerebral cortex, hippocampus, habenula, basolateral amygdaloid nuclei and cerebellum.

It localises to the cell membrane. Potassium channel regulatory subunit that modulate the delayed rectifier voltage-gated potassium channel activity of KCNB1 and KCNB2 by altering their kinetics, expression levels, and shifting the half-inactivation potential to more polarized values. While it does not form functional channels on its own, it can form functional heterotetrameric channels with KCNB1 and KCNB2. Each regulatory subunit has unique regulatory properties that can lead to extensive inhibition, significant changes in kinetics, and/or substantial shifts in the voltage dependencies of the inactivation process. The polypeptide is Delayed-rectifier potassium channel regulatory subunit KCNS1 (Mus musculus (Mouse)).